A 363-amino-acid polypeptide reads, in one-letter code: Hydroxycarboxylic acid receptor 2 (363 aa).

The Extracellular segment spans residues 1 to 33 (MNRHHLQDHFLEIDKKNCCVFRDDFIVKVLPPV). Residues 34-54 (LGLEFIFGLLGNGLALWIFCF) traverse the membrane as a helical segment. The Cytoplasmic segment spans residues 55–63 (HLKSWKSSR). Residues 64–84 (IFLFNLAVADFLLIICLPFLM) traverse the membrane as a helical segment. The Extracellular portion of the chain corresponds to 85–102 (DNYVRRWDWKFGDIPCRL). An intrachain disulfide couples Cys-100 to Cys-177. Residues 103 to 123 (MLFMLAMNRQGSIIFLTVVAV) form a helical membrane-spanning segment. At 124 to 142 (DRYFRVVHPHHALNKISNR) the chain is on the cytoplasmic side. Residues 143-163 (TAAIISCLLWGITIGLTVHLL) traverse the membrane as a helical segment. Residues 164–192 (KKKMPIQNGGANLCSSFSICHTFQWHEAM) are Extracellular-facing. A helical transmembrane segment spans residues 193–213 (FLLEFFLPLGIILFCSARIIW). The Cytoplasmic segment spans residues 214 to 229 (SLRQRQMDRHAKIKRA). The helical transmembrane segment at 230–250 (ITFIMVVAIVFVICFLPSVVV) threads the bilayer. Over 251-273 (RIRIFWLLHTSGTQNCEVYRSVD) the chain is Extracellular. A helical transmembrane segment spans residues 274–294 (LAFFITLSFTYMNSMLDPVVY). Over 295–363 (YFSSPSFPNF…SPSYLGPTSP (69 aa)) the chain is Cytoplasmic. Positions 319-363 (GEPDNNRSTSVELTGDPNKTRGAPEALMANSGEPWSPSYLGPTSP) are disordered. Ser-328 carries the phosphoserine modification.

It belongs to the G-protein coupled receptor 1 family. In terms of tissue distribution, expression largely restricted to adipose tissue and spleen. Expressed on mature neutrophils but not on immature neutrophils or eosinophils.

The protein resides in the cell membrane. Acts as a high affinity receptor for both nicotinic acid (also known as niacin) and (D)-beta-hydroxybutyrate and mediates increased adiponectin secretion and decreased lipolysis through G(i)-protein-mediated inhibition of adenylyl cyclase. This pharmacological effect requires nicotinic acid doses that are much higher than those provided by a normal diet. Mediates nicotinic acid-induced apoptosis in mature neutrophils. Receptor activation by nicotinic acid results in reduced cAMP levels which may affect activity of cAMP-dependent protein kinase A and phosphorylation of target proteins, leading to neutrophil apoptosis. The rank order of potency for the displacement of nicotinic acid binding is 5-methyl pyrazole-3-carboxylic acid = pyridine-3-acetic acid &gt; acifran &gt; 5-methyl nicotinic acid = acipimox &gt;&gt; nicotinuric acid = nicotinamide. In Homo sapiens (Human), this protein is Hydroxycarboxylic acid receptor 2 (HCAR2).